The following is a 473-amino-acid chain: Cysteine--tRNA ligase (473 aa).

Cysteine 28 contacts Zn(2+). Residues 30–40 (PTVYNYIHIGN) carry the 'HIGH' region motif. Cysteine 210, histidine 235, and glutamate 239 together coordinate Zn(2+). The 'KMSKS' region motif lies at 267-271 (KMSKS). Position 270 (lysine 270) interacts with ATP.

Belongs to the class-I aminoacyl-tRNA synthetase family. In terms of assembly, monomer. Requires Zn(2+) as cofactor.

Its subcellular location is the cytoplasm. It carries out the reaction tRNA(Cys) + L-cysteine + ATP = L-cysteinyl-tRNA(Cys) + AMP + diphosphate. In Fusobacterium nucleatum subsp. nucleatum (strain ATCC 25586 / DSM 15643 / BCRC 10681 / CIP 101130 / JCM 8532 / KCTC 2640 / LMG 13131 / VPI 4355), this protein is Cysteine--tRNA ligase.